A 162-amino-acid polypeptide reads, in one-letter code: MAKSNYITRAGWQALDQELKYLWKEERPKVTQSVSEAAALGDRSENAEYIYGKRRLREIDRRIRFLSKRLEALQIIDYHPQQAGKVFFGAWIELENNEGEINQYRIVGCDEFDPTKNWISIDSPVARALIGKCVDDEIEVQTPTGKAVFYINKIWYDTKSLY.

A coiled-coil region spans residues 52-76 (GKRRLREIDRRIRFLSKRLEALQII).

This sequence belongs to the GreA/GreB family. GreB subfamily.

Functionally, necessary for efficient RNA polymerase transcription elongation past template-encoded arresting sites. The arresting sites in DNA have the property of trapping a certain fraction of elongating RNA polymerases that pass through, resulting in locked ternary complexes. Cleavage of the nascent transcript by cleavage factors such as GreA or GreB allows the resumption of elongation from the new 3'terminus. GreB releases sequences of up to 9 nucleotides in length. The protein is Transcription elongation factor GreB of Haemophilus ducreyi (strain 35000HP / ATCC 700724).